The chain runs to 329 residues: GTPase Obg (329 aa).

The Obg domain maps to 1-159 (MQFIDQACIS…WLLHLELKLL (159 aa)). Residues 160-328 (AEVGIIGLPN…LLKNVWEKLE (169 aa)) enclose the OBG-type G domain. Residues 166–173 (GLPNAGKS), 191–195 (FTTLI), 213–216 (DIPG), 280–283 (NKKE), and 309–311 (SAA) each bind ATP. Positions 173 and 193 each coordinate Mg(2+).

The protein belongs to the TRAFAC class OBG-HflX-like GTPase superfamily. OBG GTPase family. As to quaternary structure, monomer. The cofactor is Mg(2+).

The protein localises to the cytoplasm. In terms of biological role, an essential GTPase which binds GTP, GDP and possibly (p)ppGpp with moderate affinity, with high nucleotide exchange rates and a fairly low GTP hydrolysis rate. Plays a role in control of the cell cycle, stress response, ribosome biogenesis and in those bacteria that undergo differentiation, in morphogenesis control. This chain is GTPase Obg, found in Prochlorococcus marinus (strain MIT 9211).